The chain runs to 222 residues: Transmembrane reductase CYB561D2 (222 aa).

Over 2-17 the chain is Cytoplasmic; sequence ALSVETESHIYRALRT. A Cytochrome b561 domain is found at 14–217; the sequence is ALRTASGAAA…NQVSNAYLYR (204 aa). The helical transmembrane segment at 18–38 threads the bilayer; the sequence is ASGAAAHLVALGFTIFVAVLA. The Lumenal segment spans residues 39–46; the sequence is RPGSSLFS. A helical membrane pass occupies residues 47 to 67; it reads WHPVLMSLAFSFLMTEALLMF. Residue histidine 48 participates in heme b binding. The Cytoplasmic portion of the chain corresponds to 68 to 85; that stretch reads SPESSLLRSLSRKVRARC. 2 residues coordinate heme b: histidine 86 and histidine 120. Residues 86 to 106 form a helical membrane-spanning segment; sequence HWVLQLLALLCALLGLGLVIL. The Lumenal segment spans residues 107-122; that stretch reads HKEQLGKAHLTTRHGQ. Residues 123–143 form a helical membrane-spanning segment; that stretch reads AGLLAVLWAGLQCSGGMGLLY. The Cytoplasmic portion of the chain corresponds to 144–162; the sequence is PKLLPRWPLAKLKLYHATS. Histidine 159 serves as a coordination point for heme b. Residues 163–183 form a helical membrane-spanning segment; that stretch reads GLVGYLLGSASLLLGMFSLWF. Residues 184–186 lie on the Lumenal side of the membrane; it reads TAT. A helical transmembrane segment spans residues 187–207; the sequence is VTGGAWYLAVLCPILTSLVIM. The Cytoplasmic portion of the chain corresponds to 208 to 222; it reads NQVSNAYLYRKRIQP.

It depends on heme b as a cofactor. Highly expressed in the brain, lung, liver, and kidney. Moderately expressed in the heart, placenta, skeletal muscle, and pancreas.

It localises to the endoplasmic reticulum membrane. The protein resides in the cytoplasmic vesicle membrane. The catalysed reaction is monodehydro-L-ascorbate radical(out) + L-ascorbate(in) = monodehydro-L-ascorbate radical(in) + L-ascorbate(out). It carries out the reaction Fe(3+)(out) + L-ascorbate(in) = monodehydro-L-ascorbate radical(in) + Fe(2+)(out) + H(+). Its function is as follows. Transmembrane reductase that may use ascorbate as an electron donor in the cytoplasm and transfer electrons across endoplasmic reticulum membranes to reduce monodehydro-L-ascorbate radical and iron cations Fe(3+) in the lumen of that compartment. In Mus musculus (Mouse), this protein is Transmembrane reductase CYB561D2.